The chain runs to 1383 residues: DNA-directed RNA polymerase subunit beta (1383 aa).

The protein belongs to the RNA polymerase beta chain family. The RNAP catalytic core consists of 2 alpha, 1 beta, 1 beta' and 1 omega subunit. When a sigma factor is associated with the core the holoenzyme is formed, which can initiate transcription.

It carries out the reaction RNA(n) + a ribonucleoside 5'-triphosphate = RNA(n+1) + diphosphate. Functionally, DNA-dependent RNA polymerase catalyzes the transcription of DNA into RNA using the four ribonucleoside triphosphates as substrates. This chain is DNA-directed RNA polymerase subunit beta, found in Xanthomonas oryzae pv. oryzae (strain MAFF 311018).